The following is a 92-amino-acid chain: Small ribosomal subunit protein uS19 (92 aa).

Belongs to the universal ribosomal protein uS19 family.

Its function is as follows. Protein S19 forms a complex with S13 that binds strongly to the 16S ribosomal RNA. The chain is Small ribosomal subunit protein uS19 from Staphylococcus carnosus (strain TM300).